The primary structure comprises 61 residues: uncharacterized protein (61 aa).

This is an uncharacterized protein from Acidianus convivator (ATV).